We begin with the raw amino-acid sequence, 276 residues long: uncharacterized protein (276 aa).

This is an uncharacterized protein from Fowl adenovirus A serotype 1 (strain CELO / Phelps) (FAdV-1).